We begin with the raw amino-acid sequence, 352 residues long: Holliday junction branch migration complex subunit RuvB (352 aa).

Residues 13–201 (IPRSRKELRL…FGLCHKIEFY (189 aa)) form a large ATPase domain (RuvB-L) region. ATP contacts are provided by residues leucine 37, arginine 41, glycine 82, lysine 85, threonine 86, threonine 87, 148-150 (EDF), arginine 191, tyrosine 201, and arginine 238. Threonine 86 serves as a coordination point for Mg(2+). The segment at 202–273 (SNDELKQIIF…IIEKALDSQK (72 aa)) is small ATPAse domain (RuvB-S). A head domain (RuvB-H) region spans residues 276 to 352 (NRGLDNVDRK…KYISSNNEKY (77 aa)). Residues arginine 330 and arginine 335 each coordinate DNA.

Belongs to the RuvB family. In terms of assembly, homohexamer. Forms an RuvA(8)-RuvB(12)-Holliday junction (HJ) complex. HJ DNA is sandwiched between 2 RuvA tetramers; dsDNA enters through RuvA and exits via RuvB. An RuvB hexamer assembles on each DNA strand where it exits the tetramer. Each RuvB hexamer is contacted by two RuvA subunits (via domain III) on 2 adjacent RuvB subunits; this complex drives branch migration. In the full resolvosome a probable DNA-RuvA(4)-RuvB(12)-RuvC(2) complex forms which resolves the HJ.

It is found in the cytoplasm. The catalysed reaction is ATP + H2O = ADP + phosphate + H(+). In terms of biological role, the RuvA-RuvB-RuvC complex processes Holliday junction (HJ) DNA during genetic recombination and DNA repair, while the RuvA-RuvB complex plays an important role in the rescue of blocked DNA replication forks via replication fork reversal (RFR). RuvA specifically binds to HJ cruciform DNA, conferring on it an open structure. The RuvB hexamer acts as an ATP-dependent pump, pulling dsDNA into and through the RuvAB complex. RuvB forms 2 homohexamers on either side of HJ DNA bound by 1 or 2 RuvA tetramers; 4 subunits per hexamer contact DNA at a time. Coordinated motions by a converter formed by DNA-disengaged RuvB subunits stimulates ATP hydrolysis and nucleotide exchange. Immobilization of the converter enables RuvB to convert the ATP-contained energy into a lever motion, pulling 2 nucleotides of DNA out of the RuvA tetramer per ATP hydrolyzed, thus driving DNA branch migration. The RuvB motors rotate together with the DNA substrate, which together with the progressing nucleotide cycle form the mechanistic basis for DNA recombination by continuous HJ branch migration. Branch migration allows RuvC to scan DNA until it finds its consensus sequence, where it cleaves and resolves cruciform DNA. In Prochlorococcus marinus (strain MIT 9515), this protein is Holliday junction branch migration complex subunit RuvB.